Consider the following 29-residue polypeptide: Cycloviolacin-O22 (29 aa).

A cross-link (cyclopeptide (Gly-Asn)) is located at residues Gly1–Asn29. 3 disulfides stabilise this stretch: Cys5-Cys19, Cys9-Cys21, and Cys14-Cys26.

In terms of processing, this is a cyclic peptide. As to expression, expressed in roots and runners but not in leaves, petals and petioles (at protein level).

In terms of biological role, probably participates in a plant defense mechanism. This Viola odorata (Sweet violet) protein is Cycloviolacin-O22.